Here is a 614-residue protein sequence, read N- to C-terminus: Pheromone-processing carboxypeptidase KEX1 (614 aa).

A signal peptide spans 1 to 17; sequence MKLSWSLFCGLASLALS. The Lumenal segment spans residues 18–518; the sequence is QFDEAPPSQS…SDAMWKAYYQ (501 aa). The N-linked (GlcNAc...) asparagine glycan is linked to N42. Catalysis depends on residues S177 and D379. Residues N426 and N434 are each glycosylated (N-linked (GlcNAc...) asparagine). H437 is an active-site residue. Positions 465–503 are disordered; that stretch reads SGNKPGRGSENPSDLDDQKSGDQKSDDDSSSDDDDDAEH. The segment covering 480 to 491 has biased composition (basic and acidic residues); it reads DDQKSGDQKSDD. A compositionally biased stretch (acidic residues) spans 492–501; the sequence is DSSSDDDDDA. Residues 519-539 form a helical membrane-spanning segment; that stretch reads AGFTALIVVLIILGLAGFLFW. Topologically, residues 540–614 are cytoplasmic; that stretch reads RKNRGHIYQE…EELVIRRPEV (75 aa).

It belongs to the peptidase S10 family.

The protein localises to the golgi apparatus. It is found in the trans-Golgi network membrane. It carries out the reaction Preferential release of a C-terminal arginine or lysine residue.. Protease with a carboxypeptidase B-like function involved in the C-terminal processing of the lysine and arginine residues from protein precursors. Promotes cell fusion and is involved in the programmed cell death. This chain is Pheromone-processing carboxypeptidase KEX1 (KEX1), found in Yarrowia lipolytica (strain CLIB 122 / E 150) (Yeast).